Consider the following 329-residue polypeptide: Phenylalanine--tRNA ligase alpha subunit (329 aa).

A Mg(2+)-binding site is contributed by Glu246.

The protein belongs to the class-II aminoacyl-tRNA synthetase family. Phe-tRNA synthetase alpha subunit type 1 subfamily. As to quaternary structure, tetramer of two alpha and two beta subunits. The cofactor is Mg(2+).

It is found in the cytoplasm. The enzyme catalyses tRNA(Phe) + L-phenylalanine + ATP = L-phenylalanyl-tRNA(Phe) + AMP + diphosphate + H(+). The polypeptide is Phenylalanine--tRNA ligase alpha subunit (Helicobacter hepaticus (strain ATCC 51449 / 3B1)).